The chain runs to 41 residues: Large ribosomal subunit protein bL36 (41 aa).

Belongs to the bacterial ribosomal protein bL36 family.

The chain is Large ribosomal subunit protein bL36 from Dinoroseobacter shibae (strain DSM 16493 / NCIMB 14021 / DFL 12).